The following is a 96-amino-acid chain: U-stichotoxin-Hau2b (96 aa).

The signal sequence occupies residues 1–18 (MKPIFIVALLFSTCLVNA). Propeptides lie at residues 19 to 29 (KPSIDDAEMKR) and 30 to 33 (EPKP). 2 cysteine pairs are disulfide-bonded: C40/C51 and C43/C58. Propeptides lie at residues 62 to 64 (RKR) and 65 to 68 (EPKP). Intrachain disulfides connect C75–C86 and C78–C93.

The protein belongs to the sea anemone BBH family.

It localises to the secreted. The protein localises to the nematocyst. Neurotoxin that paralyzes freshwater crabs at high concentration. In Heteractis aurora (Banded sea anemone), this protein is U-stichotoxin-Hau2b.